Here is a 168-residue protein sequence, read N- to C-terminus: Crossover junction endodeoxyribonuclease RuvC (168 aa).

Residues Asp-9, Glu-70, and Asp-145 contribute to the active site. The Mg(2+) site is built by Asp-9, Glu-70, and Asp-145.

The protein belongs to the RuvC family. As to quaternary structure, homodimer which binds Holliday junction (HJ) DNA. The HJ becomes 2-fold symmetrical on binding to RuvC with unstacked arms; it has a different conformation from HJ DNA in complex with RuvA. In the full resolvosome a probable DNA-RuvA(4)-RuvB(12)-RuvC(2) complex forms which resolves the HJ. Requires Mg(2+) as cofactor.

It localises to the cytoplasm. It catalyses the reaction Endonucleolytic cleavage at a junction such as a reciprocal single-stranded crossover between two homologous DNA duplexes (Holliday junction).. Functionally, the RuvA-RuvB-RuvC complex processes Holliday junction (HJ) DNA during genetic recombination and DNA repair. Endonuclease that resolves HJ intermediates. Cleaves cruciform DNA by making single-stranded nicks across the HJ at symmetrical positions within the homologous arms, yielding a 5'-phosphate and a 3'-hydroxyl group; requires a central core of homology in the junction. The consensus cleavage sequence is 5'-(A/T)TT(C/G)-3'. Cleavage occurs on the 3'-side of the TT dinucleotide at the point of strand exchange. HJ branch migration catalyzed by RuvA-RuvB allows RuvC to scan DNA until it finds its consensus sequence, where it cleaves and resolves the cruciform DNA. In Chlamydia caviae (strain ATCC VR-813 / DSM 19441 / 03DC25 / GPIC) (Chlamydophila caviae), this protein is Crossover junction endodeoxyribonuclease RuvC.